A 2397-amino-acid chain; its full sequence is Cell wall alpha-1,3-glucan synthase mok11 (2397 aa).

Residues 1683–1705 are disordered; it reads SNQQSFDFKSSESDSFPQKSPSV. The span at 1687-1698 shows a compositional bias: low complexity; it reads SFDFKSSESDSF.

This sequence belongs to the glycosyltransferase group 1 family.

It catalyses the reaction [(1-&gt;3)-alpha-D-glucosyl](n) + UDP-alpha-D-glucose = [(1-&gt;3)-alpha-D-glucosyl](n+1) + UDP + H(+). This is Cell wall alpha-1,3-glucan synthase mok11 (mok11) from Schizosaccharomyces pombe (strain 972 / ATCC 24843) (Fission yeast).